Here is a 508-residue protein sequence, read N- to C-terminus: Protein adenylyltransferase fic-1 (508 aa).

Residues 44 to 64 traverse the membrane as a helical segment; it reads TVIIISVLVSLICQHFVPYAV. TPR repeat units lie at residues 147-180 and 181-214; these read AILA…APTN and PQIL…DPGN. Positions 270-275 match the Inhibitory (S/T)XXXE(G/N) motif motif; that stretch reads TVAIEG. Residue glutamate 274 coordinates ATP. Residues 326–461 enclose the Fido domain; that stretch reads ISIDDILEMH…LRPFVRYVAK (136 aa). At threonine 352 the chain carries O-AMP-threonine; by autocatalysis. Residue 357–360 coordinates ATP; the sequence is VGRF. Histidine 404 is an active-site residue. ATP is bound by residues 408–415, 440–441, and asparagine 448; these read DGNGRTAR and YY. Threonine 476 carries the post-translational modification O-AMP-threonine; by autocatalysis. Positions 482 to 508 are disordered; sequence LNSGDSKLTPEESEVSEKIEAECRAGN. A compositionally biased stretch (basic and acidic residues) spans 496 to 508; sequence VSEKIEAECRAGN.

The protein belongs to the fic family. Forms homodimers; homodimerization might be required for adenylyltransferase activity. In terms of tissue distribution, ubiquitously expressed, with high expression in the germline.

The protein localises to the endoplasmic reticulum membrane. The protein resides in the nucleus membrane. It carries out the reaction L-tyrosyl-[protein] + ATP = O-(5'-adenylyl)-L-tyrosyl-[protein] + diphosphate. The catalysed reaction is L-threonyl-[protein] + ATP = 3-O-(5'-adenylyl)-L-threonyl-[protein] + diphosphate. The enzyme catalyses 3-O-(5'-adenylyl)-L-threonyl-[protein] + H2O = L-threonyl-[protein] + AMP + H(+). Its activity is regulated as follows. The side chain of Glu-274 determines which of the two opposing activities (AMPylase or de-AMPylase) will take place. In response to endoplasmic reticulum stress, mediates de-AMPylase activity. Adenylyltransferase activity is inhibited by the inhibitory helix present at the N-terminus: Glu-274 binds ATP and competes with ATP-binding at Arg-415, thereby preventing adenylyltransferase activity. In unstressed cells, disengagement of Glu-274 promotes adenylyltransferase activity. Activation dissociates ATP-binding from Glu-274, allowing ordered binding of the entire ATP moiety with the alpha-phosphate in an orientation that is productive for accepting an incoming target hydroxyl side chain. Its function is as follows. Protein that can both mediate the addition of adenosine 5'-monophosphate (AMP) to specific residues of target proteins (AMPylation), and the removal of the same modification from target proteins (de-AMPylation), depending on the context. The side chain of Glu-274 determines which of the two opposing activities (AMPylase or de-AMPylase) will take place. Adenylyltransferase that mediates the addition of adenosine 5'-monophosphate (AMP) to specific residues of target proteins. In vivo target proteins include the heat-shock 70 family proteins hsp-1 and hsp-3 and the translation elongation factors eef-1A, eef-1G and eef-2. Can AMPylate core histone H3 in vitro. Can also act as a phosphodiesterase by mediating removal of ATP (de-AMPylation) from target proteins. Decreases susceptibility to P.aeruginosa-mediated killing and might therefore play a role in the innate immune response. The polypeptide is Protein adenylyltransferase fic-1 (Caenorhabditis elegans).